Consider the following 92-residue polypeptide: MQFSTVASVAFVALANFVAAESAAAISQITDGQIQATTTATTEATTTAAPSSTVETVSPSSTETISQQTENGAAKAAVGMGAGALAAAAMLL.

An N-terminal signal peptide occupies residues Met-1–Ala-20. The PIR1/2/3 repeat unit spans residues Ala-24–Thr-37. Residues Thr-41–Ser-60 are disordered. A lipid anchor (GPI-anchor amidated asparagine) is attached at Asn-71. A propeptide spans Gly-72–Leu-92 (removed in mature form).

This sequence belongs to the SRP1/TIP1 family. In terms of processing, extensively O-glycosylated. Post-translationally, the GPI-anchor is attached to the protein in the endoplasmic reticulum and serves to target the protein to the cell surface. There, the glucosamine-inositol phospholipid moiety is cleaved off and the GPI-modified mannoprotein is covalently attached via its lipidless GPI glycan remnant to the 1,6-beta-glucan of the outer cell wall layer. Covalently linked to beta-1,3-glucan of the inner cell wall layer via an alkali-sensitive ester linkage between the gamma-carboxyl group of glutamic acids, arising from a specific glutamine within the PIR1/2/3 repeat, and hydroxyl groups of glucoses of beta-1,3-glucan chains.

Its subcellular location is the secreted. The protein resides in the cell wall. It localises to the membrane. In terms of biological role, component of the cell wall. The polypeptide is Cell wall protein CWP2 (CWP2) (Saccharomyces cerevisiae (strain ATCC 204508 / S288c) (Baker's yeast)).